A 453-amino-acid chain; its full sequence is Oocyte zinc finger protein XlCOF6 (453 aa).

14 C2H2-type zinc fingers span residues 6 to 29 (FICS…CGKH), 67 to 89 (FTCT…HKTH), 95 to 117 (FTCM…YKAH), 123 to 145 (VRCT…KRLH), 151 to 173 (FTCT…HKTH), 179 to 201 (FACT…QRTH), 207 to 229 (FTCT…RRTH), 235 to 257 (FTCT…HKTH), 263 to 285 (FTCT…QITH), 291 to 313 (FTCT…HKTH), 319 to 341 (FACT…QRTH), 375 to 397 (FTCT…HKTH), 403 to 425 (FTCT…QRTH), and 431 to 453 (FTCT…RITH).

It belongs to the krueppel C2H2-type zinc-finger protein family.

It localises to the nucleus. In terms of biological role, may be involved in transcriptional regulation. The chain is Oocyte zinc finger protein XlCOF6 from Xenopus laevis (African clawed frog).